The following is a 258-amino-acid chain: Global transcriptional regulator CodY (258 aa).

The GAF domain stretch occupies residues 1–156 (MSTLLDKTRK…SATIVGLEIL (156 aa)). Positions 204–223 (ASKIADKVGITRSVIVNALR) form a DNA-binding region, H-T-H motif.

It belongs to the CodY family.

It is found in the cytoplasm. DNA-binding global transcriptional regulator which is involved in the adaptive response to starvation and acts by directly or indirectly controlling the expression of numerous genes in response to nutrient availability. During rapid exponential growth, CodY is highly active and represses genes whose products allow adaptation to nutrient depletion. The sequence is that of Global transcriptional regulator CodY from Clostridium kluyveri (strain NBRC 12016).